Consider the following 755-residue polypeptide: Protein phosphatase 1E (755 aa).

Residues 21-131 (EFRGPCGGGE…PPLPPLPRPL (111 aa)) form a disordered region. Tandem repeats lie at residues 31–32 (PE), 33–34 (PE), 35–36 (PE), 37–38 (PE), 39–40 (PE), 41–42 (PE), and 43–44 (PE). The interval 31 to 52 (PEPEPEPEPEPEPESEPEPEPE) is 11 X 2 AA tandem repeats of P-E. Composition is skewed to acidic residues over residues 31–68 (PEPE…EPGE) and 77–101 (EEGD…EEEG). An 8; approximate repeat occupies 45 to 46 (SE). 3 tandem repeats follow at residues 47–48 (PE), 49–50 (PE), and 51–52 (PE). Over residues 102–113 (AATAAAAPGHSA) the composition is skewed to low complexity. Residues 114–129 (VPPPPPQLPPLPPLPR) show a composition bias toward pro residues. One can recognise a PPM-type phosphatase domain in the interval 231–488 (ETSIHAIKNM…DNITVIVVFL (258 aa)). The Mn(2+) site is built by aspartate 273, glycine 274, aspartate 435, and aspartate 479. Residues 498 to 537 (SEESDWTENSFQGGQEDGGDDKENHGECKRPWPQHQCSAP) are disordered. Residues 518–527 (DKENHGECKR) are compositionally biased toward basic and acidic residues. 2 positions are modified to phosphoserine: serine 535 and serine 548.

Belongs to the PP2C family. As to quaternary structure, heterotrimer. Interacts with PAX1 and ARHGEF6 (or ARHGEF7). It depends on Mg(2+) as a cofactor. Mn(2+) is required as a cofactor.

The protein resides in the nucleus. It localises to the cytoplasm. It catalyses the reaction O-phospho-L-seryl-[protein] + H2O = L-seryl-[protein] + phosphate. It carries out the reaction O-phospho-L-threonyl-[protein] + H2O = L-threonyl-[protein] + phosphate. In terms of biological role, protein phosphatase that inactivates multifunctional CaM kinases such as CAMK4 and CAMK2. Dephosphorylates and inactivates PAK. May play a role in the inhibition of actin fiber stress breakdown and in morphological changes driven by TNK2/CDC42. Dephosphorylates PRKAA2. The sequence is that of Protein phosphatase 1E (PPM1E) from Homo sapiens (Human).